The chain runs to 114 residues: MAEQPSRQQILQTQYNSYKSRLQQIAQKIVDLETDADEHKLVMDTLNSMDNNRRCFRMIHGVLVERTVGTVVPILKTTQEGIQTAMNGLLDQYKQLEAEFQKFQKDNKIQVVRQ.

Belongs to the prefoldin subunit beta family. In terms of assembly, heterohexamer of two PFD-alpha type and four PFD-beta type subunits.

Binds specifically to cytosolic chaperonin (c-CPN) and transfers target proteins to it. Binds to nascent polypeptide chain and promotes folding in an environment in which there are many competing pathways for nonnative proteins. This Schizosaccharomyces pombe (strain 972 / ATCC 24843) (Fission yeast) protein is Probable prefoldin subunit 2.